The sequence spans 37 residues: Photosystem II reaction center protein Y (37 aa).

A helical membrane pass occupies residues A4–I22.

This sequence belongs to the PsbY family. PSII is composed of 1 copy each of membrane proteins PsbA, PsbB, PsbC, PsbD, PsbE, PsbF, PsbH, PsbI, PsbJ, PsbK, PsbL, PsbM, PsbT, PsbX, PsbY, Psb30/Ycf12, peripheral proteins PsbO, CyanoQ (PsbQ), PsbU, PsbV and a large number of cofactors. It forms dimeric complexes.

The protein localises to the cellular thylakoid membrane. Its function is as follows. Loosely associated component of the core of photosystem II (PSII), it is not always seen in crystals. PSII is a light-driven water plastoquinone oxidoreductase, using light energy to abstract electrons from H(2)O, generating a proton gradient subsequently used for ATP formation. The chain is Photosystem II reaction center protein Y from Prochlorococcus marinus (strain MIT 9312).